Reading from the N-terminus, the 530-residue chain is Probable glycerol-3-phosphate acyltransferase 2 (530 aa).

The next 3 helical transmembrane spans lie at 70–90 (YFMVVAFEAGGVIRSLFLLVL), 93–113 (FISLMSYEMGLKTMVMLSFFG), and 275–295 (LVLFMWAPFAAVLAAARLVFG). The HXXXXD motif motif lies at 339-344 (HRTLLD).

Belongs to the GPAT/DAPAT family. As to expression, weakly or not expressed in roots, leaves, seedlings, developing siliques and flower buds.

The protein resides in the membrane. It carries out the reaction sn-glycerol 3-phosphate + an acyl-CoA = a 1-acyl-sn-glycero-3-phosphate + CoA. It functions in the pathway phospholipid metabolism; CDP-diacylglycerol biosynthesis; CDP-diacylglycerol from sn-glycerol 3-phosphate: step 1/3. Its function is as follows. Esterifies acyl-group from acyl-ACP to the sn-1 position of glycerol-3-phosphate, an essential step in glycerolipid biosynthesis. The chain is Probable glycerol-3-phosphate acyltransferase 2 (GPAT2) from Arabidopsis thaliana (Mouse-ear cress).